The chain runs to 642 residues: Threonine--tRNA ligase (642 aa).

The TGS domain maps to 1-61 (MPAITLPDGS…AADAQVVFVT (61 aa)). The catalytic stretch occupies residues 243-536 (DHRRLGKEMD…LIEQYAGRFP (294 aa)). Positions 336, 387, and 513 each coordinate Zn(2+).

This sequence belongs to the class-II aminoacyl-tRNA synthetase family. In terms of assembly, homodimer. The cofactor is Zn(2+).

It is found in the cytoplasm. The enzyme catalyses tRNA(Thr) + L-threonine + ATP = L-threonyl-tRNA(Thr) + AMP + diphosphate + H(+). Catalyzes the attachment of threonine to tRNA(Thr) in a two-step reaction: L-threonine is first activated by ATP to form Thr-AMP and then transferred to the acceptor end of tRNA(Thr). Also edits incorrectly charged L-seryl-tRNA(Thr). In Granulibacter bethesdensis (strain ATCC BAA-1260 / CGDNIH1), this protein is Threonine--tRNA ligase.